Here is a 4516-residue protein sequence, read N- to C-terminus: MVTLSISDTLHTPAFVENRHLAITGMPTRKANNGFPSPDDNNVWGQFWKDLQTPLLVVVYVHGAQCQLLLPIENRRVSSGSDKSLKNGMEECDKEEASTSSQGPGYCPANVPENHDLEKMLKESSRNPEKTSPNPELKTPPLPLSDLGQPRKSPLAGTDKKYPIMKQRGFYSDILSPGTLDQLGDVCCGPYLSQNLIRQADLDKFTPKGQCHEHWAAESFVIPEDFQERVEQQSIGTTTRLLTQTDFPLQSYEPKVQVPFQVLPGRCPRKIEIERRKQQYLRLDIEQLLANEGIDSNKLMPRHPDLQQPQTIEQGRDPLFPIYLPLKVFDNEEFDCRTPTEWLNMGLEPDAQYRKPVPGKALLPTDDALGHVHRAGCKQVSFSKCINTGISLPEAGKKQSVSFTLDSNDRNNLTKLSPVLQCLAIKPWEQGHVKCTEFQLPRFTGALALSRNTRAKRGSQEASTRDHLDFEDPKSQELDYRWCEVGVLDYDEEKKLYLVQKTDKRGLVRDEMGMPIVNGGVTPEGRPPLLDTQYWVPRIQLLFCAEDPRVFTQRVVQANALRKNTEALLLYNLYVDCMPTEGQRVINEQSLSKIKQWALSTPRMRKGPSVLEHLSSLAREVNLDYERSMNKINFDQIVSSKPETFSFVTLPEKEEEKVPNQGLVSVPEYPFREQKEDFTFVSLLTRSEVITALSKVRAECNKVTSMSLFHSNLSKYSRLEEFEQIQSQTFSQVQMFLKDSWISTLKVAMRSSLRDMSKGWYNLYETNWEVYLMSKLRKLMELIKYMLQDTLRFLVQDSLGSFAQFIGDACCSVLECIDDMDWGEDLINSPYKPRKNPLFIVDLVLDNTGVHYSTPLEQFEVILLNLFDKGILATHAVPQLEKLVMEDIFISGDPLLESVGLHEPLVEELRANITNAMHKAMIPLQAYAKEYRKTYQTQCPSAEEVREVVITHLKEKEILDNSLPSSIIIGPFYINVDNVKQSLSKKRKALATSMLDILAKNLHNEVDSICEEFRSISRKIYEKPNSIEELAELRDWMKGIPEKLVILEVRQALALAARSLVEPEVGPALEIPFNNPLPSMTRHFLLMQERIVKVMSDYEVMDEFFYNLTTDDFNDKWAANNWPTKILGQIDMVRQQHVEDEEKFRKIQLMDQNNFQEKLEGLQLVVAGFSTHVEIARAHEIANEVRRVKKQLKDCQQLAMLYNNRERIFGLPITNYDKLSRMVKEFQPYLDLWTTASDWLRWSESWMNDPLSAIDAEQLEKNVIESFKTMHKCVKQFKDIPACQDVALDIRARIDEFKPYIPLIQGLRNPGMRNRHWEVLSNEININVRPKANLTFARCLEMNLQDYIESISKVAEVAGKEYAIEQALDKMEKEWASILFNVLPYKETDTYILKSPDEASQLLDDHIVMTQSMSFSPYKKPFEQRINSWETKLKLTQEVLEEWLNCQRSWLYLEPIFSSEDITRQLPVESKRYQTMERIWRKIMKNAYENREVINVCSDQRLLDSLRDCNKLLDLVQKGLSEYLETKRTAFPRFYFLSDDELLEILSQTKDPTAVQPHLRKCFENIARLLFQEDLEITHMYSAEGEEVKLSFSIYPSSNVEDWLLEVERSMKASVHDIIEMAIKAYPTMLRTEWVLSWPGQVTIAGCQTYWTLEVAQALEASSISSSLFPQLSKQLSDLVALVRGKLSRMQRMVLSALIVIEVHAKDVVSKLIDENVVSVHDFEWISQLRYYWTNNDLYIRAVNAEFIYGYEYLGNSGRLVITPLTDRCYLTLTGALHLKFGGAPAGPAGTGKTETTKDLGKALAIQTVVFNCSDQLDFMAMGKFFKGLASAGAWACFDEFNRIDIEVLSVVAQQITTIQKAQQQRSREYIKSLGGAVMCLPFLCVLYVQALFRPVAMMVPDYAMIAEISLYSFGFNEANVLAKKITTTFKLSSEQLSSQDHYDFGMRAVKTVISAAGNLKRENPTMNEELICLRAIRDVNVPKFLQEDLKLFSGIVSDLFPTTKEEETDYGILDQAIRKACEKNNLKDVEGFLIKCIQLYETTVVRHGLMLVGPTGSGKSNCYRILAAAMTSLKGKPSISGGVYEAVNYYVLNPKSITMGQLYGEFDLLTHEWTDGIFPSLIRAGAIASDTNKKWYMFDGPVDAVWIENMNTVLDDNKKLCLSSGEIIKLTEAMTMMFEVQDLAVASPATVSRCGMVYLEPSILGLMPFVECWLKHLPSIIKPYEEQFKTLFVKFLESSIAFVRTTVKEVVASTNSNLTMSLLKLLDCFFKPFLPREGLKKIPSEKLSHIPELIEPWFIFSLVWSVGATGDHSSRLNFSQWLKIKMVFEQIKLAFPEEGLVYDYRLDDAGISSTEDDDEDDEESKQVATALPAQEGGMVKPPGLWDLPPRDSGHLEKATLTASRSEAVAWVKWMDYSVPFTMMPDTNYCNIIVPTMDTMQMSYLLGMLITNHKPVLCIGPTGTGKTLTVSNKLLKNLPLEYISHFLTFSARTSANQTQDLIDSKLDKRRKGVFGPPLGRNFIFFIDDLNMPALETYGAQPPIELLRQWMDHGGWYDRKIIGAFKNLVDINFVCAMGPPGGGRNAITPRLTRHFNYLSFIEMDEVSKKRIFSIILGCWMDGLLGEKSYREPVPGAPNIVHMTEPLVNATISIYAIITSQLLPTPAKSHYTFNLRDLSKVFQGILMAEPAKVEDKVQLLRLWYHENCRVFRDRLVNEEDRGWFDGLLEMKMEDLGVAFNKVCPFQPILYGDFMSPGSDVKSYELITSENKMMQVIEEYMEDYNQINTAKLKLVLFVDAMSHICRISRTLRQALGNALLLGVGGSGRSSLTRLASHMAEYECFQVELSKNYGMSEWREDVKKILLKAGMQNLPITFLFSDTQIKNESFLEDINNILNSGDIPNLYSADEQDQIVNTMRPYIQEQGLQPTKANLMAAYTGRVRNNIHMVLCMSPIGEVFRARLRQFPSLVNCCTIDWFNEWPAEALQSVATRFLHEIPELECSSEVIEGLIHVCVYIHQSVAKKCVEYLAELARHNYVTPKSYLELLNIFSILIGQKKMELKTAKHRMKSGLDKLLRTSEDVAKMQEELEIMRPLLEEAAKDTLLTMDQIKVDTAIAEETRKSVQAEEIKANEKASKAQAIADDAQKDLDEALPALDAALASLRNLNKNDVTEVRAMQRPPPGVKLVIEAVCIMKGIKPKKVPGEKPGSKVDDYWEPGKGLLQDPGRFLESLFKFDKDNIGEAVIKAIQPYIDNEEFQPAAIAKVSKACTSICQWVRAMHKYHFVAKAVEPKRQALREAQDDLEVTQRILEEAKHHLREVEDGISTLQAKYRECVTKKEELEMKCEQCEQRLGRADKSQSPGQPPGAHPTRLLLQLINGLADEKVRWQDTVENLENMLDNIFGDVLVAAGFVAYLGPFTGQYRAALYEYWVNQLTVYGVPHTSKPTLISTLGNPVKIRSWQIAGLPNDTLSVENGVINQFSQRWTHFIDPQGQANKWIKNMEKESGLDVFKLSDRDFLRSMENAIRFGKPCLLENVGEELDPALEPVLLKQTYKQQGNTVLKLGDTVIPYHEDFRMYITTKLPNPHYSPEVSTKLTLINFTLSPSGLEDQLLGQVVAEERPDLEEAKNQLIISNAKMRQELKDIEDQILYRLSSSEGNPVDDVELIKVLEASKMKAAEIQAKVRIAEQTEKDIDLTRMEYIPVAVRTQILFFCVSDLANVDPMYQYSLEWFLNIFLSGIANSERADNLKKRIVNINRYLTFSLYSNVCRSLFEKHKLMFAFLLCVRIMMNEGKINQGEWRYLLSGGSIQTMSENPAPHWLSDRAWRDILALSNLPAFSTFSTDFVQHLPKFQAIFDSAEPHREPLPGIWNTYLDEFQKLLILRCLRGDKVTNAMQDFVANHLEPRFIEPQTANLSAVFKESNSTTPLIFVLSPGTDPAADLYKFAEEMKFSKKLSAISLGQGQGPRAEAMMRNSIERGKWVFFQNCHLAPSWMPALERLIEHINPDKVHRDFRLWLTSLPSNKFPVSILQNGSKMTIEPPRGVKANLLKSYNSLSDDFLHSCQKVVEFKSLLLSLCLFHGNALERRKFGPLGFNIPYEFTDGDLRICISQLKMFLDEYEDIPYKVLKYTAGEINYGGRVTDDWDRRCVMNILEDFYNPAVLSPEHRYSKSGIYHQIPPTYDLNGYLSYIKSLPLNDMPEIFGLHDNANITFAQNETFALFGAILQLQPKSSSMGGQSREELVEDVAEDILVQVPKPVDLEEVVNKYPVLYEESMNTVLVQEVIRYNKLLMVITQTLSDMLKAIKGLVVMSLELELMSTSLYNNAVPELWKSKAYPSLKPLASWIMDLLQRLNFLHSWIKNGIPSVFWISGFFFPQAFLTGTLQNFARKFVISIDTITFDFKVLSYASSEIAERPSTGCYIYGLFLEGARWDPFDFQLAESRPKELYTEMAVIWLLPVANRKVQNQDFYLCPIYKTLTRAGTLSTTGHSTNYVIAVEIPSNQPQRHWIKRGVALICALDY.

The stem stretch occupies residues 1 to 1748 (MVTLSISDTL…YIRAVNAEFI (1748 aa)). The interval 78 to 160 (SSGSDKSLKN…RKSPLAGTDK (83 aa)) is disordered. Composition is skewed to basic and acidic residues over residues 83–97 (KSLK…KEEA) and 113–129 (ENHD…RNPE). 4 AAA regions span residues 1749–1956 (YGYE…VISA), 2016–2249 (QAIR…TTVK), 2422–2682 (TMMP…VFQG), and 2780–2972 (DYNQ…CCTI). Positions 1787–1794 (GPAGTGKT) match the GPAGTGKT motif motif. Position 1787–1794 (1787–1794 (GPAGTGKT)) interacts with ATP. The short motif at 1837-1843 (CFDEFNR) is the CFDEFNR motif element. Residues 2054-2061 (GPTGSGKS), 2460-2467 (GPTGTGKT), and 2819-2826 (GVGGSGRS) contribute to the ATP site. Residues 2987–3285 (ATRFLHEIPE…MHKYHFVAKA (299 aa)) are stalk. Residues 3293–3394 (LREAQDDLEV…QDTVENLENM (102 aa)) adopt a coiled-coil conformation. 2 AAA regions span residues 3388–3618 (VENL…EERP) and 3831–4050 (LPAF…SYNS).

The protein belongs to the dynein heavy chain family. In terms of assembly, consists of at least two heavy chains and a number of intermediate and light chains. As to expression, expressed in brain.

It is found in the cytoplasm. The protein resides in the cytoskeleton. The protein localises to the cilium axoneme. Its subcellular location is the cell projection. It localises to the cilium. It is found in the flagellum. Force generating protein of cilia required for sperm flagellum motility. Produces force towards the minus ends of microtubules. Dynein has ATPase activity; the force-producing power stroke is thought to occur on release of ADP. Required in spermatozoa for the formation of the inner dynein arms and biogenesis of the axoneme. This is Dynein axonemal heavy chain 1 from Rattus norvegicus (Rat).